Reading from the N-terminus, the 251-residue chain is Hydroxyacylglutathione hydrolase (251 aa).

Residues H53, H55, D57, H58, H110, D127, and H165 each contribute to the Zn(2+) site.

Belongs to the metallo-beta-lactamase superfamily. Glyoxalase II family. As to quaternary structure, monomer. Zn(2+) serves as cofactor.

It catalyses the reaction an S-(2-hydroxyacyl)glutathione + H2O = a 2-hydroxy carboxylate + glutathione + H(+). The protein operates within secondary metabolite metabolism; methylglyoxal degradation; (R)-lactate from methylglyoxal: step 2/2. Thiolesterase that catalyzes the hydrolysis of S-D-lactoyl-glutathione to form glutathione and D-lactic acid. In Salmonella dublin (strain CT_02021853), this protein is Hydroxyacylglutathione hydrolase.